A 457-amino-acid polypeptide reads, in one-letter code: RuvB-like helicase 1 (457 aa).

An ATP-binding site is contributed by 73–80 (GGPSTGKT).

It belongs to the RuvB family. As to quaternary structure, may form heterododecamers with RVB2. Component of the SWR1 chromatin remodeling complex, the INO80 chromatin remodeling complex, and of the R2TP complex.

The protein resides in the nucleus. The enzyme catalyses ATP + H2O = ADP + phosphate + H(+). Functionally, DNA helicase which participates in several chromatin remodeling complexes, including the SWR1 and the INO80 complexes. The SWR1 complex mediates the ATP-dependent exchange of histone H2A for the H2A variant HZT1 leading to transcriptional regulation of selected genes by chromatin remodeling. The INO80 complex remodels chromatin by shifting nucleosomes and is involved in DNA repair. Also involved in pre-rRNA processing. This is RuvB-like helicase 1 (RVB1) from Kluyveromyces lactis (strain ATCC 8585 / CBS 2359 / DSM 70799 / NBRC 1267 / NRRL Y-1140 / WM37) (Yeast).